A 325-amino-acid polypeptide reads, in one-letter code: Gamma-hemolysin component B (325 aa).

An N-terminal signal peptide occupies residues 1-25 (MNMNKLVKSSVATSMALLLLSNTAN).

The protein belongs to the aerolysin family. Toxicity requires sequential binding and synergistic association of a class S and a class F component which form heterooligomeric complexes. HlgB (class F) associates with either hlgA thus forming an AB toxin or with hlgC thus forming a CB toxin. Interacts with host AMFR.

In terms of biological role, toxin that seems to act by forming pores in the membrane of the cell. Has a hemolytic and a leucotoxic activity. Promotes host AMFR-mediated inflammation by mediating 'Lys-27'-linked ubiquitination of TAB3, TAK1-TAB3 complex formation and phosphorylation of TAK1/MAP3K7. In turn, activates host NF-kappa-B signaling pathway. The chain is Gamma-hemolysin component B (hlgB) from Staphylococcus aureus (strain MRSA252).